We begin with the raw amino-acid sequence, 434 residues long: MLFQVVLISGMQWGDEGKGKLVSLLSKDFDLVARYNGGHNSGHELFLDGVKYKLHLLPCGCLYPNTVNVLGNGVVVHLESLINEIDNLTKLGVDLTNRLFISERAHLVFDLHIAVDAQLENEQGEHSTSIGTTKRGIGPTNSTKCKRTGIQIGEMLNWDNFEKLLSKLTYKLCHENKVFTNSDTRDLLNKQLEQHKVNFSKIADSVVDTSYMIQKYIKEGKKVFFEGANGSLLDLALGTYPYVTSSNTTTSGVYNGLGINPNVKILKVGVLKAYQTRVGKGPFPTELFDENFNKLQKFGAEFGVTTGRVRRCGWLDLVAAKYVQNFSGFDLINLSKLDILSQFDEIKLCTHYKHKLTGKLLEEGRYPSCCYQYDEYEPVYKTMPGWKTDISKFKTFEELPQNAQNYVLFIEEYLGVFIYWIGTGRDVNSMIVRT.

Residues 14 to 20 and 42 to 44 contribute to the GTP site; these read GDEGKGK and GHE. Catalysis depends on aspartate 15, which acts as the Proton acceptor. Mg(2+)-binding residues include aspartate 15 and glycine 42. IMP contacts are provided by residues 15-18, 40-43, threonine 133, arginine 147, asparagine 229, threonine 244, and arginine 308; these read DEGK and NSGH. Histidine 43 (proton donor) is an active-site residue. Residue 304–310 participates in substrate binding; that stretch reads VTTGRVR. GTP-binding positions include arginine 310, 336–338, and 422–424; these read KLD and GTG.

The protein belongs to the adenylosuccinate synthetase family. In terms of assembly, homodimer. Mg(2+) is required as a cofactor.

The protein resides in the cytoplasm. The enzyme catalyses IMP + L-aspartate + GTP = N(6)-(1,2-dicarboxyethyl)-AMP + GDP + phosphate + 2 H(+). It participates in purine metabolism; AMP biosynthesis via de novo pathway; AMP from IMP: step 1/2. Functionally, plays an important role in the salvage pathway for purine nucleotide biosynthesis. Catalyzes the first committed step in the biosynthesis of AMP from IMP. The sequence is that of Adenylosuccinate synthetase from Theileria parva (East coast fever infection agent).